The sequence spans 443 residues: Thymidine phosphorylase (443 aa).

Belongs to the thymidine/pyrimidine-nucleoside phosphorylase family. Homodimer.

It carries out the reaction thymidine + phosphate = 2-deoxy-alpha-D-ribose 1-phosphate + thymine. It participates in pyrimidine metabolism; dTMP biosynthesis via salvage pathway; dTMP from thymine: step 1/2. In terms of biological role, the enzymes which catalyze the reversible phosphorolysis of pyrimidine nucleosides are involved in the degradation of these compounds and in their utilization as carbon and energy sources, or in the rescue of pyrimidine bases for nucleotide synthesis. The sequence is that of Thymidine phosphorylase from Shewanella sp. (strain MR-4).